A 1009-amino-acid chain; its full sequence is Putative receptor-like protein 8 (1009 aa).

Positions 1–22 (MKTNFVILLLLLCVFAISPSQQ) are cleaved as a signal peptide. The Extracellular portion of the chain corresponds to 23 to 961 (EEINQHNPGI…EEDDEAPVDM (939 aa)). Residues Asn159 and Asn197 are each glycosylated (N-linked (GlcNAc...) asparagine). The stretch at 204 to 231 (FEEVRSLELSAGLNGFVDNVEGYKSLRK) is one LRR 1; degenerate repeat. LRR repeat units follow at residues 232–255 (LKNL…PFIN), 257–281 (ATSL…EIKD), 282–305 (LTNL…LTHL), 306–329 (KKLK…VVCE), 331–354 (KNLW…LGRL), 355–377 (NKLR…TFNR), 379–402 (ESLE…PLAN), 404–427 (TKLK…SEPK), 442–465 (LEKI…ATIV), 466–490 (HELQ…GYAL), 492–514 (NLLR…MGEM), 515–538 (VNIT…FVTG), 540–565 (FSLK…SFTS), 567–587 (EELR…LLSS), 588–612 (NTTL…MSNL), 613–636 (SGLT…LLAI), 638–660 (FLSL…VGGE), 662–681 (GIKL…DTLL), 682–705 (EKVQ…VNTE), 707–728 (IYIL…LCDL), 729–752 (RNIR…LYNL), 819–842 (LDYM…ELGS), 843–866 (LSKL…SFSN), 867–891 (LKDI…LTNL), and 893–916 (SLVV…QFNT). The N-linked (GlcNAc...) asparagine glycan is linked to Asn267. 2 N-linked (GlcNAc...) asparagine glycosylation sites follow: Asn390 and Asn402. Residues Asn497, Asn516, Asn526, and Asn551 are each glycosylated (N-linked (GlcNAc...) asparagine). 2 N-linked (GlcNAc...) asparagine glycosylation sites follow: Asn588 and Asn611. Asn716 and Asn751 each carry an N-linked (GlcNAc...) asparagine glycan. 4 N-linked (GlcNAc...) asparagine glycosylation sites follow: Asn850, Asn890, Asn903, and Asn934. The segment at 934–955 (NRSCDAKKTSDESENGGEEEDD) is disordered. Acidic residues predominate over residues 945-955 (ESENGGEEEDD). A helical transmembrane segment spans residues 962 to 982 (LAFYFSSASTYVTTLIGIFIL). The Cytoplasmic segment spans residues 983–1009 (MCFDCPLRRAWLRIVDASIASVKSMLP).

The protein belongs to the RLP family.

It localises to the cell membrane. This is Putative receptor-like protein 8 from Arabidopsis thaliana (Mouse-ear cress).